We begin with the raw amino-acid sequence, 268 residues long: MVNPQKINHFGKLEMAFEPRRGYTRLVHVYQQPPLKASRELYEGSDPTATVFLMESSGGMVAGDRNEINVKLASGSRVRLKQQSALKIYPSHTGDHCTQAITVEMADEARLEWLPEVTIPFERAKFQADTTIRMKESSTLIWGEIVAPGREMRGEVFDYQAYQSKYKVYVEEQLIAFDSIHFKPQEMNFAALGLLEKALYIGSLWIVSPLVKNLNMRDLQDLIQQEQSLQASVTKLTDQAIHCRWLAKEQRTLHKEINRMFEQMTALL.

Belongs to the UreD family. As to quaternary structure, ureD, UreF and UreG form a complex that acts as a GTP-hydrolysis-dependent molecular chaperone, activating the urease apoprotein by helping to assemble the nickel containing metallocenter of UreC. The UreE protein probably delivers the nickel.

It localises to the cytoplasm. Required for maturation of urease via the functional incorporation of the urease nickel metallocenter. The protein is Urease accessory protein UreD of Lysinibacillus sphaericus (strain C3-41).